The primary structure comprises 766 residues: Dolichyl pyrophosphate Glc1Man9GlcNAc2 alpha-1,3-glucosyltransferase (766 aa).

12 consecutive transmembrane segments (helical) span residues 6–26 (LVLA…PAYV), 60–80 (YPPF…FFGF), 96–116 (ILIF…AVCA), 156–176 (SIHF…LFFI), 190–210 (ILLN…FYYL), 228–248 (AISL…PFIH), 324–344 (PMGT…GLVI), 350–370 (ADFS…GYHV), 395–415 (ILIH…FTPF), 423–443 (ICVS…LMPL), 452–472 (VASW…HKWL), and 482–502 (LMAI…ALIW).

It belongs to the ALG6/ALG8 glucosyltransferase family.

The protein localises to the endoplasmic reticulum membrane. The enzyme catalyses an alpha-D-Glc-(1-&gt;3)-alpha-D-Man-(1-&gt;2)-alpha-D-Man-(1-&gt;2)-alpha-D-Man-(1-&gt;3)-[alpha-D-Man-(1-&gt;2)-alpha-D-Man-(1-&gt;3)-[alpha-D-Man-(1-&gt;2)-alpha-D-Man-(1-&gt;6)]-alpha-D-Man-(1-&gt;6)]-beta-D-Man-(1-&gt;4)-beta-D-GlcNAc-(1-&gt;4)-alpha-D-GlcNAc-diphospho-di-trans,poly-cis-dolichol + a di-trans,poly-cis-dolichyl beta-D-glucosyl phosphate = an alpha-D-Glc-(1-&gt;3)-alpha-D-Glc-(1-&gt;3)-alpha-D-Man-(1-&gt;2)-alpha-D-Man-(1-&gt;2)-alpha-D-Man-(1-&gt;3)-[alpha-D-Man-(1-&gt;2)-alpha-D-Man-(1-&gt;3)-[alpha-D-Man-(1-&gt;2)-alpha-D-Man-(1-&gt;6)]-alpha-D-Man-(1-&gt;6)]-beta-D-Man-(1-&gt;4)-beta-D-GlcNAc-(1-&gt;4)-alpha-D-GlcNAc-diphospho-di-trans,poly-cis-dolichol + a di-trans,poly-cis-dolichyl phosphate + H(+). The protein operates within protein modification; protein glycosylation. Dolichyl pyrophosphate Glc1Man9GlcNAc2 alpha-1,3-glucosyltransferase that operates in the biosynthetic pathway of dolichol-linked oligosaccharides, the glycan precursors employed in protein asparagine (N)-glycosylation. The assembly of dolichol-linked oligosaccharides begins on the cytosolic side of the endoplasmic reticulum membrane and finishes in its lumen. The sequential addition of sugars to dolichol pyrophosphate produces dolichol-linked oligosaccharides containing fourteen sugars, including two GlcNAcs, nine mannoses and three glucoses. Once assembled, the oligosaccharide is transferred from the lipid to nascent proteins by oligosaccharyltransferases. In the lumen of the endoplasmic reticulum, adds the second glucose residue from dolichyl phosphate glucose (Dol-P-Glc) onto the lipid-linked oligosaccharide intermediate Glc(1)Man(9)GlcNAc(2)-PP-Dol to produce Glc(2)Man(9)GlcNAc(2)-PP-Dol. The protein is Dolichyl pyrophosphate Glc1Man9GlcNAc2 alpha-1,3-glucosyltransferase of Caenorhabditis elegans.